The following is a 596-amino-acid chain: Aspartate--tRNA(Asp/Asn) ligase (596 aa).

Glu172 contacts L-aspartate. Positions 196 to 199 are aspartate; the sequence is QLFK. L-aspartate is bound at residue Arg218. ATP is bound by residues 218–220 and Gln227; that span reads RDE. An L-aspartate-binding site is contributed by His455. Residue Glu489 coordinates ATP. Arg496 provides a ligand contact to L-aspartate. An ATP-binding site is contributed by 541–544; sequence GLDR.

This sequence belongs to the class-II aminoacyl-tRNA synthetase family. Type 1 subfamily. In terms of assembly, homodimer.

It is found in the cytoplasm. It carries out the reaction tRNA(Asx) + L-aspartate + ATP = L-aspartyl-tRNA(Asx) + AMP + diphosphate. Functionally, aspartyl-tRNA synthetase with relaxed tRNA specificity since it is able to aspartylate not only its cognate tRNA(Asp) but also tRNA(Asn). Reaction proceeds in two steps: L-aspartate is first activated by ATP to form Asp-AMP and then transferred to the acceptor end of tRNA(Asp/Asn). This Bordetella avium (strain 197N) protein is Aspartate--tRNA(Asp/Asn) ligase.